The sequence spans 365 residues: G-protein coupled receptor 68 (365 aa).

The Extracellular segment spans residues 1 to 12 (MGNITTENSSLS). N-linked (GlcNAc...) asparagine glycosylation is found at Asn3 and Asn8. A helical membrane pass occupies residues 13-49 (CPIDHTIHQTLAPVVYVTVLVVGFPANCLSLYFGYLQ). Cystine bridges form between Cys13–Cys258 and Cys94–Cys172. The Cytoplasmic segment spans residues 50-53 (IKAR). A helical transmembrane segment spans residues 54–84 (NELGVYLCNLTIADLFYICSLPFWLQYVLQH). Over 85–89 (DDWSH) the chain is Extracellular. The helical transmembrane segment at 90-125 (GDLSCQVCGILLYENIYISVGFLCCISIDRYLAVAH) threads the bilayer. The Cytoplasmic segment spans residues 126–133 (PFRFHQFR). The helical transmembrane segment at 134–160 (TLKAAVGVSVLIWAKELLTSIYFLNHK) threads the bilayer. Topologically, residues 161–176 (EVIEDEDQHRVCFEHY) are extracellular. The segment at 161-176 (EVIEDEDQHRVCFEHY) is extracellular loop 2 (ECL2). A helical membrane pass occupies residues 177–214 (PIQAWQRSINYYRFLVGFLFPICLLLASYQGILRAVRR). The Cytoplasmic portion of the chain corresponds to 215 to 218 (SHGT). The helical transmembrane segment at 219 to 254 (QKSRKDQIQRLVLSTVVIFLACFLPYHVLLLVRSLW) threads the bilayer. The Extracellular portion of the chain corresponds to 255–260 (ERNCEF). Residues 261–289 (AKSIFNVYHFSLLLTSFNCVADPVLYCFV) form a helical membrane-spanning segment. At 290–365 (SETTHRDLAR…VGGPSTVGLA (76 aa)) the chain is on the cytoplasmic side.

It belongs to the G-protein coupled receptor 1 family. Expressed in the lung, testis, heart, brain, spleen, thymus, brown fat, small intestine, colon, peripheral blood leukocytes, macrophages, stomach, ovary and white fat but not in the liver, kidney, and skeletal muscle. Expression in the prostate is weak but detectable. Specifically expressed in endothelial cells of small-diameter resistance arteries.

The protein localises to the cell membrane. Its activity is regulated as follows. Activated by a network of residues that connects an extracellular-facing cavity to Glu-149, a conserved charged residue buried in the transmembrane core of the receptor. Protonation likely drives conformational changes in extracellular loop 2 (ECL2), which stabilizes movement of transmembrane 3 (TM3) and a series of rearrangements that connect the extracellular-facing cavity to Glu-149, a residue only conserved in proton-sensing G-protein coupled receptors. Activated in an allosteric manner by divalent metal ions at the extracellular surface following the order: Cd(2+) &gt; Co(2+) &gt; Ni(2+) &gt; Zn(2+) &gt; Fe(2+) &gt; Ca(2+) &gt; Mg(2+). Activated by ogerin (ZINC67740571), a selective GPR68 positive allosteric modulator. Inhibited by small molecule GPR68-I, decreasing inflammation in models of colitis. In terms of biological role, proton-sensing G-protein coupled receptor activated by extracellular pH, which is required to monitor pH changes and generate adaptive reactions. The receptor is almost silent at pH 7.8 but fully activated at pH 6.8. Ligand binding causes a conformation change that triggers signaling via guanine nucleotide-binding proteins (G proteins) and modulates the activity of downstream effectors, such as phospholipase C. GPR68 is mainly coupled to G(q) G proteins and mediates production of diacylglycerol (DAG) and inositol 1,4,5-trisphosphate (IP3). Acts as a key mechanosensor of fluid shear stress and membrane stretch. Expressed in endothelial cells of small-diameter resistance arteries, where it mediates flow-induced dilation in response to shear stress. May represents an osteoblastic pH sensor regulating cell-mediated responses to acidosis in bone. Acts as a regulator of calcium-sensing receptor CASR in a seesaw manner: GPR68-mediated signaling inhibits CASR signaling in response to protons, while CASR inhibits GPR68 in presence of extracellular calcium. Also functions as a metastasis suppressor gene in prostate cancer. The polypeptide is G-protein coupled receptor 68 (Mus musculus (Mouse)).